The sequence spans 240 residues: uncharacterized protein (240 aa).

A run of 3 helical transmembrane segments spans residues 12-32 (ICIHISVNILFIDIYITILMS), 66-86 (IQVLNALTRLCIYLAIIFVLV), and 89-109 (ISGYAYVPIIFILIIIVIYFF). N-linked (GlcNAc...) asparagine; by host glycosylation is found at asparagine 129 and asparagine 157.

The protein localises to the membrane. This is an uncharacterized protein from Acanthamoeba polyphaga mimivirus (APMV).